Here is a 227-residue protein sequence, read N- to C-terminus: tRNA (guanine-N(7)-)-methyltransferase (227 aa).

4 residues coordinate S-adenosyl-L-methionine: Glu-60, Glu-85, Asp-112, and Asp-135. Asp-135 is a catalytic residue. Substrate is bound by residues Lys-139, Asp-171, and 206 to 209 (TKFE).

It belongs to the class I-like SAM-binding methyltransferase superfamily. TrmB family.

It catalyses the reaction guanosine(46) in tRNA + S-adenosyl-L-methionine = N(7)-methylguanosine(46) in tRNA + S-adenosyl-L-homocysteine. Its pathway is tRNA modification; N(7)-methylguanine-tRNA biosynthesis. Its function is as follows. Catalyzes the formation of N(7)-methylguanine at position 46 (m7G46) in tRNA. The chain is tRNA (guanine-N(7)-)-methyltransferase from Thiobacillus denitrificans (strain ATCC 25259 / T1).